Here is a 221-residue protein sequence, read N- to C-terminus: Large ribosomal subunit protein uL16A (221 aa).

It belongs to the universal ribosomal protein uL16 family. As to quaternary structure, component of the large ribosomal subunit (LSU). Mature yeast ribosomes consist of a small (40S) and a large (60S) subunit. The 40S small subunit contains 1 molecule of ribosomal RNA (18S rRNA) and at least 33 different proteins. The large 60S subunit contains 3 rRNA molecules (25S, 5.8S and 5S rRNA) and at least 46 different proteins.

The protein resides in the cytoplasm. In terms of biological role, component of the ribosome, a large ribonucleoprotein complex responsible for the synthesis of proteins in the cell. The small ribosomal subunit (SSU) binds messenger RNAs (mRNAs) and translates the encoded message by selecting cognate aminoacyl-transfer RNA (tRNA) molecules. The large subunit (LSU) contains the ribosomal catalytic site termed the peptidyl transferase center (PTC), which catalyzes the formation of peptide bonds, thereby polymerizing the amino acids delivered by tRNAs into a polypeptide chain. The nascent polypeptides leave the ribosome through a tunnel in the LSU and interact with protein factors that function in enzymatic processing, targeting, and the membrane insertion of nascent chains at the exit of the ribosomal tunnel. This is Large ribosomal subunit protein uL16A (rpl1001) from Schizosaccharomyces pombe (strain 972 / ATCC 24843) (Fission yeast).